The following is a 99-amino-acid chain: Large ribosomal subunit protein bL27 (99 aa).

A propeptide spanning residues 1–12 (MMINNLEALKLF) is cleaved from the precursor. The disordered stretch occupies residues 15-36 (HKGGGSTANGRNSAGRRLGAKR).

This sequence belongs to the bacterial ribosomal protein bL27 family. Post-translationally, the N-terminus is cleaved by ribosomal processing cysteine protease Prp.

This Lactobacillus johnsonii (strain CNCM I-12250 / La1 / NCC 533) protein is Large ribosomal subunit protein bL27.